The primary structure comprises 207 residues: Large ribosomal subunit protein uL4 (207 aa).

Residues 45–57 (RQGTHSVKNRSTV) show a composition bias toward polar residues. Residues 45 to 77 (RQGTHSVKNRSTVSGGGRKPWRQKGTGNARQGS) are disordered.

It belongs to the universal ribosomal protein uL4 family. In terms of assembly, part of the 50S ribosomal subunit.

Its function is as follows. One of the primary rRNA binding proteins, this protein initially binds near the 5'-end of the 23S rRNA. It is important during the early stages of 50S assembly. It makes multiple contacts with different domains of the 23S rRNA in the assembled 50S subunit and ribosome. Functionally, forms part of the polypeptide exit tunnel. This Oenococcus oeni (strain ATCC BAA-331 / PSU-1) protein is Large ribosomal subunit protein uL4.